We begin with the raw amino-acid sequence, 342 residues long: N-acetyl-gamma-glutamyl-phosphate reductase (342 aa).

Residue Cys146 is part of the active site.

It belongs to the NAGSA dehydrogenase family. Type 1 subfamily.

The protein resides in the cytoplasm. It catalyses the reaction N-acetyl-L-glutamate 5-semialdehyde + phosphate + NADP(+) = N-acetyl-L-glutamyl 5-phosphate + NADPH + H(+). It functions in the pathway amino-acid biosynthesis; L-arginine biosynthesis; N(2)-acetyl-L-ornithine from L-glutamate: step 3/4. In terms of biological role, catalyzes the NADPH-dependent reduction of N-acetyl-5-glutamyl phosphate to yield N-acetyl-L-glutamate 5-semialdehyde. The sequence is that of N-acetyl-gamma-glutamyl-phosphate reductase from Streptomyces avermitilis (strain ATCC 31267 / DSM 46492 / JCM 5070 / NBRC 14893 / NCIMB 12804 / NRRL 8165 / MA-4680).